The chain runs to 382 residues: Chaperone protein DnaJ 1 (382 aa).

Residues 4 to 68 (DYYGILGVDR…DKRRIVDMGG (65 aa)) enclose the J domain. The segment at 134-216 (GAKKDLTLDT…CAGDGRVRAR (83 aa)) adopts a CR-type zinc-finger fold. Zn(2+) is bound by residues cysteine 147, cysteine 150, cysteine 164, cysteine 167, cysteine 190, cysteine 193, cysteine 204, and cysteine 207. 4 CXXCXGXG motif repeats span residues 147–154 (CTKCHGSG), 164–171 (CGTCNGAG), 190–197 (CHTCDGTG), and 204–211 (CTECAGDG).

It belongs to the DnaJ family. As to quaternary structure, homodimer. Requires Zn(2+) as cofactor.

The protein localises to the cytoplasm. Its function is as follows. Participates actively in the response to hyperosmotic and heat shock by preventing the aggregation of stress-denatured proteins and by disaggregating proteins, also in an autonomous, DnaK-independent fashion. Unfolded proteins bind initially to DnaJ; upon interaction with the DnaJ-bound protein, DnaK hydrolyzes its bound ATP, resulting in the formation of a stable complex. GrpE releases ADP from DnaK; ATP binding to DnaK triggers the release of the substrate protein, thus completing the reaction cycle. Several rounds of ATP-dependent interactions between DnaJ, DnaK and GrpE are required for fully efficient folding. Also involved, together with DnaK and GrpE, in the DNA replication of plasmids through activation of initiation proteins. This is Chaperone protein DnaJ 1 from Corynebacterium glutamicum (strain ATCC 13032 / DSM 20300 / JCM 1318 / BCRC 11384 / CCUG 27702 / LMG 3730 / NBRC 12168 / NCIMB 10025 / NRRL B-2784 / 534).